Reading from the N-terminus, the 334-residue chain is Small ribosomal subunit protein uS2 (334 aa).

The protein belongs to the universal ribosomal protein uS2 family.

The polypeptide is Small ribosomal subunit protein uS2 (Xanthobacter autotrophicus (strain ATCC BAA-1158 / Py2)).